Reading from the N-terminus, the 119-residue chain is FAD-linked sulfhydryl oxidase (119 aa).

One can recognise an ERV/ALR sulfhydryl oxidase domain in the interval 1–97 (MLHWGPKFWR…ISWSEYKNIY (97 aa)). A disulfide bridge connects residues cysteine 44 and cysteine 47.

This sequence belongs to the asfivirus B119L family. As to quaternary structure, interacts with A151R. The cofactor is FAD.

It is found in the host cytoplasm. It localises to the virion. The catalysed reaction is 2 R'C(R)SH + O2 = R'C(R)S-S(R)CR' + H2O2. In terms of biological role, FAD-dependent sulfhydryl oxidase that catalyzes the formation of disulfide bonds in viral proteins produced in the cell cytoplasm. The chain is FAD-linked sulfhydryl oxidase from Ornithodoros (relapsing fever ticks).